The following is a 163-amino-acid chain: Putative defense protein 3 (163 aa).

A signal peptide spans Met-1–Ala-18. One can recognise a Reelin domain in the interval Tyr-19–Lys-163. Cysteines 28 and 103 form a disulfide.

The protein belongs to the insect defense protein family.

The protein localises to the secreted. Functionally, may have antimicrobial activity. This chain is Putative defense protein 3, found in Antheraea mylitta (Tasar silkworm).